Consider the following 303-residue polypeptide: Coenzyme PQQ synthesis protein B (303 aa).

The protein belongs to the PqqB family.

Its pathway is cofactor biosynthesis; pyrroloquinoline quinone biosynthesis. May be involved in the transport of PQQ or its precursor to the periplasm. The polypeptide is Coenzyme PQQ synthesis protein B (Pseudomonas putida (strain GB-1)).